A 289-amino-acid polypeptide reads, in one-letter code: MTAATLDLAIITGLSGAGRSTAAKCLEDLGWFVVDNLPPALLSTMAELGHRSGGAVSRIAVVVDVRGRAFFSDLRAAVEALDSRGMHPRMLFLEASDDALVRRFDHVRRPHPLQGDERVVDGINRERTLLAELRGEADLVLDTTDLNVHELRAKIDAAFGQPRANRLNATVISFGYKYGLPLDADLVADCRFLPNPHWVEALRPYTGRDSQVRDYVLAQPGATEFVDQYTALLRLVGEGYVREGKRYLTLAVGCTGGKHRSVAVAEQLGARLAADGVGVRVVHRDLGRE.

Position 13 to 20 (13 to 20 (GLSGAGRS)) interacts with ATP. 64–67 (DVRG) contributes to the GTP binding site.

Belongs to the RapZ-like family.

Its function is as follows. Displays ATPase and GTPase activities. The chain is Nucleotide-binding protein Franean1_2060 from Parafrankia sp. (strain EAN1pec).